Consider the following 325-residue polypeptide: Elongation factor P--(R)-beta-lysine ligase (325 aa).

76-78 (SPE) serves as a coordination point for substrate. ATP is bound by residues 100 to 102 (RNE) and Asn109. Tyr118 is a substrate binding site. 244–245 (EL) contacts ATP. Position 251 (Glu251) interacts with substrate. Gly300 contributes to the ATP binding site.

It belongs to the class-II aminoacyl-tRNA synthetase family. EpmA subfamily. Homodimer.

The enzyme catalyses D-beta-lysine + L-lysyl-[protein] + ATP = N(6)-((3R)-3,6-diaminohexanoyl)-L-lysyl-[protein] + AMP + diphosphate + H(+). Its function is as follows. With EpmB is involved in the beta-lysylation step of the post-translational modification of translation elongation factor P (EF-P). Catalyzes the ATP-dependent activation of (R)-beta-lysine produced by EpmB, forming a lysyl-adenylate, from which the beta-lysyl moiety is then transferred to the epsilon-amino group of a conserved specific lysine residue in EF-P. The polypeptide is Elongation factor P--(R)-beta-lysine ligase (Hamiltonella defensa subsp. Acyrthosiphon pisum (strain 5AT)).